Consider the following 301-residue polypeptide: uncharacterized protein (301 aa).

The N-terminal stretch at 1 to 28 (MFFREDKSVAFRLRSAALSGCATGQSDA) is a signal peptide.

This is an uncharacterized protein from Treponema pallidum (strain Nichols).